Reading from the N-terminus, the 369-residue chain is Phosphatidylglycerol--prolipoprotein diacylglyceryl transferase (369 aa).

Transmembrane regions (helical) follow at residues 26 to 46, 60 to 80, and 97 to 117; these read YYGILYATGILVAIIAGILTL, YVFIGIISIIFGARTWSFIIG, and LAIQGGVIFTITTGLIFFFFI. Position 167 (Arg-167) interacts with a 1,2-diacyl-sn-glycero-3-phospho-(1'-sn-glycerol). Helical transmembrane passes span 216–236 and 273–293; these read VPIFLIESFFNVIAFIIIVFL and FVTSIVTSVLFLLGGSIGFIF.

This sequence belongs to the Lgt family.

The protein resides in the cell membrane. It catalyses the reaction L-cysteinyl-[prolipoprotein] + a 1,2-diacyl-sn-glycero-3-phospho-(1'-sn-glycerol) = an S-1,2-diacyl-sn-glyceryl-L-cysteinyl-[prolipoprotein] + sn-glycerol 1-phosphate + H(+). It participates in protein modification; lipoprotein biosynthesis (diacylglyceryl transfer). In terms of biological role, catalyzes the transfer of the diacylglyceryl group from phosphatidylglycerol to the sulfhydryl group of the N-terminal cysteine of a prolipoprotein, the first step in the formation of mature lipoproteins. In Mycoplasmoides gallisepticum (strain R(low / passage 15 / clone 2)) (Mycoplasma gallisepticum), this protein is Phosphatidylglycerol--prolipoprotein diacylglyceryl transferase.